A 595-amino-acid polypeptide reads, in one-letter code: Elongation factor 4 (595 aa).

Residues 2–183 (KNIRNFCIIA…AIIERISPPT (182 aa)) form the tr-type G domain. GTP-binding positions include 14-19 (DHGKST) and 130-133 (NKID).

This sequence belongs to the TRAFAC class translation factor GTPase superfamily. Classic translation factor GTPase family. LepA subfamily.

The protein resides in the cell inner membrane. It catalyses the reaction GTP + H2O = GDP + phosphate + H(+). Required for accurate and efficient protein synthesis under certain stress conditions. May act as a fidelity factor of the translation reaction, by catalyzing a one-codon backward translocation of tRNAs on improperly translocated ribosomes. Back-translocation proceeds from a post-translocation (POST) complex to a pre-translocation (PRE) complex, thus giving elongation factor G a second chance to translocate the tRNAs correctly. Binds to ribosomes in a GTP-dependent manner. The protein is Elongation factor 4 of Amoebophilus asiaticus (strain 5a2).